A 68-amino-acid chain; its full sequence is Large ribosomal subunit protein bL35 (68 aa).

It belongs to the bacterial ribosomal protein bL35 family.

The protein is Large ribosomal subunit protein bL35 of Orientia tsutsugamushi (strain Boryong) (Rickettsia tsutsugamushi).